A 216-amino-acid polypeptide reads, in one-letter code: Protein-L-isoaspartate O-methyltransferase 1 (216 aa).

Ser-60 is a catalytic residue.

This sequence belongs to the methyltransferase superfamily. L-isoaspartyl/D-aspartyl protein methyltransferase family.

The protein resides in the cytoplasm. The enzyme catalyses [protein]-L-isoaspartate + S-adenosyl-L-methionine = [protein]-L-isoaspartate alpha-methyl ester + S-adenosyl-L-homocysteine. Functionally, catalyzes the methyl esterification of L-isoaspartyl residues in peptides and proteins that result from spontaneous decomposition of normal L-aspartyl and L-asparaginyl residues. It plays a role in the repair and/or degradation of damaged proteins. In Archaeoglobus fulgidus (strain ATCC 49558 / DSM 4304 / JCM 9628 / NBRC 100126 / VC-16), this protein is Protein-L-isoaspartate O-methyltransferase 1 (pcm1).